The following is a 106-amino-acid chain: Iron-sulfur cluster assembly protein CyaY (106 aa).

This sequence belongs to the frataxin family.

Its function is as follows. Involved in iron-sulfur (Fe-S) cluster assembly. May act as a regulator of Fe-S biogenesis. This chain is Iron-sulfur cluster assembly protein CyaY, found in Yersinia pestis bv. Antiqua (strain Antiqua).